Consider the following 439-residue polypeptide: Protein translocase subunit SecY (439 aa).

10 helical membrane passes run 19–39 (ILFTIFILFVFRLGAHITAPG), 68–88 (YSLFAMGVSPYITASIIVQLL), 116–136 (YITLVLAMAQSIGITAGFQAM), 151–171 (LMIGVLLTTGSMVVTWMGEQI), 176–196 (FGSGVSVIIFAGIVSGIPSAI), 216–236 (WIFVIGLILSAIVIIYVTTFV), 269–289 (VIPVIFAGSITTAPATILQFL), 312–332 (WTGMLFYALLIVLFTFFYSFV), 373–393 (VGSLFLGLISIIPIAAQNVWG), and 396–416 (KIVALGGTSLLILIQVAIQAV).

This sequence belongs to the SecY/SEC61-alpha family. In terms of assembly, component of the Sec protein translocase complex. Heterotrimer consisting of SecY, SecE and SecG subunits. The heterotrimers can form oligomers, although 1 heterotrimer is thought to be able to translocate proteins. Interacts with the ribosome. Interacts with SecDF, and other proteins may be involved. Interacts with SecA.

It is found in the cell membrane. The central subunit of the protein translocation channel SecYEG. Consists of two halves formed by TMs 1-5 and 6-10. These two domains form a lateral gate at the front which open onto the bilayer between TMs 2 and 7, and are clamped together by SecE at the back. The channel is closed by both a pore ring composed of hydrophobic SecY resides and a short helix (helix 2A) on the extracellular side of the membrane which forms a plug. The plug probably moves laterally to allow the channel to open. The ring and the pore may move independently. The chain is Protein translocase subunit SecY from Lactococcus lactis subsp. cremoris (Streptococcus cremoris).